The following is a 160-amino-acid chain: Large ribosomal subunit protein uL13 (160 aa).

The protein belongs to the universal ribosomal protein uL13 family. As to quaternary structure, part of the 50S ribosomal subunit.

In terms of biological role, this protein is one of the early assembly proteins of the 50S ribosomal subunit, although it is not seen to bind rRNA by itself. It is important during the early stages of 50S assembly. The chain is Large ribosomal subunit protein uL13 from Orientia tsutsugamushi (strain Boryong) (Rickettsia tsutsugamushi).